Reading from the N-terminus, the 356-residue chain is Stomatin-like protein 2, mitochondrial (356 aa).

Residues 1 to 28 (MLARAARGTGALLLKGSVQASARAPRRA) constitute a mitochondrion transit peptide. Position 17 is a phosphoserine; by PKC/PRKCZ (serine 17). Tyrosine 124 carries the phosphotyrosine modification. N6-acetyllysine; alternate is present on lysine 145. Position 145 is an N6-succinyllysine; alternate (lysine 145). Positions 215–252 (INVAEGKKQAQILASEAEKAEQINQAAGEASAVLAKAK) form a coiled coil. Lysine 233 carries the N6-acetyllysine modification. A disordered region spans residues 326-356 (EAQDSVSSRSSRDVRSTDASLDEELDRVKLS). Phosphoserine is present on serine 330.

The protein belongs to the band 7/mec-2 family. As to quaternary structure, forms homooligomers. Interacts with MFN2; may form heterooligomers with this mediator of mitochondrial fusion. Interacts with PHB1 and PHB2; stabilizes and recruits them to cardiolipin-enriched mitochondrial membranes. Interacts with CACNA2D2.

Its subcellular location is the cell membrane. It localises to the mitochondrion. The protein localises to the mitochondrion inner membrane. The protein resides in the mitochondrion intermembrane space. It is found in the membrane raft. Its subcellular location is the cytoplasm. It localises to the cytoskeleton. Functionally, mitochondrial protein that probably regulates the biogenesis and the activity of mitochondria. Stimulates cardiolipin biosynthesis, binds cardiolipin-enriched membranes where it recruits and stabilizes some proteins including prohibitin and may therefore act in the organization of functional microdomains in mitochondrial membranes. Through regulation of the mitochondrial function may play a role into several biological processes including cell migration, cell proliferation, T-cell activation, calcium homeostasis and cellular response to stress. May play a role in calcium homeostasis through negative regulation of calcium efflux from mitochondria. Required for mitochondrial hyperfusion a pro-survival cellular response to stress which results in increased ATP production by mitochondria. May also regulate the organization of functional domains at the plasma membrane and play a role in T-cell activation through association with the T-cell receptor signaling complex and its regulation. This Bos taurus (Bovine) protein is Stomatin-like protein 2, mitochondrial (STOML2).